The sequence spans 638 residues: Pentatricopeptide repeat-containing protein At3g49730 (638 aa).

PPR repeat units follow at residues 130–164 (SYEV…NPEL), 166–200 (EPEL…GLEP), 201–231 (DEYV…MREK), 235–269 (NLRY…GLEP), 270–304 (DIVV…GFEP), 305–340 (NVNC…GCEA), 341–375 (DIVT…GVMP), 376–410 (SQVT…GCHP), 411–445 (DLLI…GLSP), 446–480 (GVDT…GIFS), 483–513 (QYGT…ISNK), and 520–554 (NVSA…DLMP). The interval 604–638 (LIEKAKPKGNKEGKKKGTDHQRYKGRGERSRAKAL) is disordered.

It belongs to the PPR family. P subfamily.

This is Pentatricopeptide repeat-containing protein At3g49730 from Arabidopsis thaliana (Mouse-ear cress).